We begin with the raw amino-acid sequence, 790 residues long: Vacuolar protein sorting-associated protein 35B (790 aa).

This sequence belongs to the VPS35 family. As to quaternary structure, component of the retromer complex which consists of VPS29 (MAG1), VPS26 (VPS26A or VPS26B), VPS35 (VPS35A or VPS35B or VPS35C), VPS5/17 (SNX1 or SNX2A or SNX2B). Component of a retromer subcomplex consisting of VPS29 (MAG1), VPS26 (VPS26A or VPS26B), VPS35 (VPS35A or VPS35B or VPS35C). Expressed in siliques and maturing seeds (at protein level).

It localises to the cytoplasm. It is found in the endosome membrane. Its subcellular location is the prevacuolar compartment membrane. The protein resides in the golgi apparatus. The protein localises to the trans-Golgi network membrane. Its function is as follows. Plays a role in vesicular protein sorting. Component of the membrane-associated retromer complex which is essential in endosome-to-Golgi retrograde transport. Also involved in the efficient sorting of seed storage proteins globulin 12S and albumin 2S. The VPS29-VPS26-VPS35 subcomplex may be involved in recycling of specific cargos from endosome to the plasma membrane. In Arabidopsis thaliana (Mouse-ear cress), this protein is Vacuolar protein sorting-associated protein 35B (VPS35B).